The sequence spans 178 residues: Nascent polypeptide-associated complex subunit alpha (178 aa).

The 65-residue stretch at 20–84 (SKNEKKAREL…AKVDDMNKRI (65 aa)) folds into the NAC-A/B domain. The segment covering 87–104 (AQAQQEQQEALTKAAADA) has biased composition (low complexity). The interval 87–142 (AQAQQEQQEALTKAAADAETADKSPESITNDLQNASLEDKTVEEDEGEVDETGLDS) is disordered. The segment covering 112-122 (ESITNDLQNAS) has biased composition (polar residues). Positions 127 to 139 (TVEEDEGEVDETG) are enriched in acidic residues. One can recognise a UBA domain in the interval 140 to 178 (LDSKDIEIIVEQTQVSRAKAVKALRAHKGDMVNAIMELS).

This sequence belongs to the NAC-alpha family. As to quaternary structure, part of the nascent polypeptide-associated complex (NAC), consisting of EGD2 and EGD1. NAC associates with ribosomes via EGD1.

Its subcellular location is the cytoplasm. It localises to the nucleus. Its function is as follows. Component of the nascent polypeptide-associated complex (NAC), a dynamic component of the ribosomal exit tunnel, protecting the emerging polypeptides from interaction with other cytoplasmic proteins to ensure appropriate nascent protein targeting. The NAC complex also promotes mitochondrial protein import by enhancing productive ribosome interactions with the outer mitochondrial membrane and blocks the inappropriate interaction of ribosomes translating non-secretory nascent polypeptides with translocation sites in the membrane of the endoplasmic reticulum. EGD2 may also be involved in transcription regulation. The sequence is that of Nascent polypeptide-associated complex subunit alpha (EGD2) from Meyerozyma guilliermondii (strain ATCC 6260 / CBS 566 / DSM 6381 / JCM 1539 / NBRC 10279 / NRRL Y-324) (Yeast).